The following is a 52-amino-acid chain: UPF0391 membrane protein ABAYE0050 (52 aa).

2 helical membrane-spanning segments follow: residues 6-26 and 30-50; these read IIFA…VAGL and FAVI…ISRG.

This sequence belongs to the UPF0391 family.

It localises to the cell membrane. In Acinetobacter baumannii (strain AYE), this protein is UPF0391 membrane protein ABAYE0050.